A 266-amino-acid polypeptide reads, in one-letter code: L-aspartate dehydrogenase (266 aa).

2 residues coordinate NAD(+): Ala123 and Asn189. The active site involves His219.

Belongs to the L-aspartate dehydrogenase family.

It catalyses the reaction L-aspartate + NADP(+) + H2O = oxaloacetate + NH4(+) + NADPH + H(+). The catalysed reaction is L-aspartate + NAD(+) + H2O = oxaloacetate + NH4(+) + NADH + H(+). It functions in the pathway cofactor biosynthesis; NAD(+) biosynthesis; iminoaspartate from L-aspartate (dehydrogenase route): step 1/1. Its function is as follows. Specifically catalyzes the NAD or NADP-dependent dehydrogenation of L-aspartate to iminoaspartate. This Cupriavidus taiwanensis (strain DSM 17343 / BCRC 17206 / CCUG 44338 / CIP 107171 / LMG 19424 / R1) (Ralstonia taiwanensis (strain LMG 19424)) protein is L-aspartate dehydrogenase.